We begin with the raw amino-acid sequence, 54 residues long: Ribulose bisphosphate carboxylase large chain (54 aa).

A propeptide spanning residues 1 to 2 (MS) is cleaved from the precursor. An N-acetylproline modification is found at Pro-3. An N6,N6,N6-trimethyllysine modification is found at Lys-14.

Belongs to the RuBisCO large chain family. Type I subfamily. Heterohexadecamer of 8 large chains and 8 small chains.

The protein localises to the plastid. It is found in the chloroplast. It catalyses the reaction 2 (2R)-3-phosphoglycerate + 2 H(+) = D-ribulose 1,5-bisphosphate + CO2 + H2O. The enzyme catalyses D-ribulose 1,5-bisphosphate + O2 = 2-phosphoglycolate + (2R)-3-phosphoglycerate + 2 H(+). RuBisCO catalyzes two reactions: the carboxylation of D-ribulose 1,5-bisphosphate, the primary event in carbon dioxide fixation, as well as the oxidative fragmentation of the pentose substrate in the photorespiration process. Both reactions occur simultaneously and in competition at the same active site. The polypeptide is Ribulose bisphosphate carboxylase large chain (rbcL) (Icacina mannii).